The primary structure comprises 760 residues: Xaa-Pro dipeptidyl-peptidase (760 aa).

Active-site charge relay system residues include S349, D469, and H499.

It belongs to the peptidase S15 family. As to quaternary structure, homodimer.

It localises to the cytoplasm. It catalyses the reaction Hydrolyzes Xaa-Pro-|- bonds to release unblocked, N-terminal dipeptides from substrates including Ala-Pro-|-p-nitroanilide and (sequentially) Tyr-Pro-|-Phe-Pro-|-Gly-Pro-|-Ile.. Removes N-terminal dipeptides sequentially from polypeptides having unsubstituted N-termini provided that the penultimate residue is proline. This Streptococcus pyogenes serotype M28 (strain MGAS6180) protein is Xaa-Pro dipeptidyl-peptidase.